The chain runs to 229 residues: MTEGNPHEQVTVTDKRRIDPDTGEVRSIPLGDTPGGSEPAGMTDRSANSTDTMVDKVAELTSDLQRVQADFANYRKRALRDQQTASDRAKATVISQLLGVLDDFDRAREHGDLDSGPLKSVADKLMSALTGLGLVAFGVEGEDFDPVLHEAVQHEGDGGEGSKPVIGDVLRHGYKLGDQVLRHALVGVVDTIAGDGAETVAIVAPVDSTAKTEQGELGDNVTPHKEDGD.

2 disordered regions span residues 1-49 and 207-229; these read MTEG…SANS and DSTA…EDGD. Basic and acidic residues predominate over residues 13–24; that stretch reads TDKRRIDPDTGE.

Belongs to the GrpE family. As to quaternary structure, homodimer.

The protein resides in the cytoplasm. Functionally, participates actively in the response to hyperosmotic and heat shock by preventing the aggregation of stress-denatured proteins, in association with DnaK and GrpE. It is the nucleotide exchange factor for DnaK and may function as a thermosensor. Unfolded proteins bind initially to DnaJ; upon interaction with the DnaJ-bound protein, DnaK hydrolyzes its bound ATP, resulting in the formation of a stable complex. GrpE releases ADP from DnaK; ATP binding to DnaK triggers the release of the substrate protein, thus completing the reaction cycle. Several rounds of ATP-dependent interactions between DnaJ, DnaK and GrpE are required for fully efficient folding. In Mycobacterium leprae (strain TN), this protein is Protein GrpE.